Here is a 252-residue protein sequence, read N- to C-terminus: Ribosomal RNA small subunit methyltransferase NEP1 (252 aa).

Residues Met-176, Gly-209, Gly-214, and 227 to 232 contribute to the S-adenosyl-L-methionine site; that span reads ISNYPL.

Belongs to the class IV-like SAM-binding methyltransferase superfamily. RNA methyltransferase NEP1 family. Homodimer. Part of the small subunit (SSU) processome, composed of more than 70 proteins and the RNA chaperone small nucleolar RNA (snoRNA) U3.

The protein resides in the nucleus. It localises to the nucleolus. The enzyme catalyses a pseudouridine in rRNA + S-adenosyl-L-methionine = an N(1)-methylpseudouridine in rRNA + S-adenosyl-L-homocysteine + H(+). Functionally, S-adenosyl-L-methionine-dependent pseudouridine N(1)-methyltransferase that methylates a pseudouridine in 18S rRNA. Involved the biosynthesis of the hypermodified N1-methyl-N3-(3-amino-3-carboxypropyl) pseudouridine (m1acp3-Psi) conserved in eukaryotic 18S rRNA. Also has an essential role in 40S ribosomal subunit biogenesis independent on its methyltransferase activity, facilitating the incorporation of ribosomal protein S19 during the formation of pre-ribosomes. Its function is as follows. S-adenosyl-L-methionine-dependent pseudouridine N(1)-methyltransferase that methylates pseudouridine at position in 18S rRNA. Involved the biosynthesis of the hypermodified N1-methyl-N3-(3-amino-3-carboxypropyl) pseudouridine (m1acp3-Psi) conserved in eukaryotic 18S rRNA. Is not able to methylate uridine at this position. Also has an essential role in 40S ribosomal subunit biogenesis independent on its methyltransferase activity, facilitating the incorporation of ribosomal protein S19 during the formation of pre-ribosomes. Part of the small subunit (SSU) processome, first precursor of the small eukaryotic ribosomal subunit. During the assembly of the SSU processome in the nucleolus, many ribosome biogenesis factors, an RNA chaperone and ribosomal proteins associate with the nascent pre-rRNA and work in concert to generate RNA folding, modifications, rearrangements and cleavage as well as targeted degradation of pre-ribosomal RNA by the RNA exosome. This chain is Ribosomal RNA small subunit methyltransferase NEP1, found in Drosophila melanogaster (Fruit fly).